A 177-amino-acid chain; its full sequence is Large ribosomal subunit protein uL6 (177 aa).

In terms of assembly, part of the 50S ribosomal subunit.

Functionally, this protein binds to the 23S rRNA, and is important in its secondary structure. It is located near the subunit interface in the base of the L7/L12 stalk, and near the tRNA binding site of the peptidyltransferase center. The protein is Large ribosomal subunit protein uL6 of Rhodopseudomonas palustris (strain ATCC BAA-98 / CGA009).